The primary structure comprises 523 residues: 2-isopropylmalate synthase (523 aa).

The region spanning 5–267 is the Pyruvate carboxyltransferase domain; the sequence is VIIFDTTLRD…HTAINHQEIW (263 aa). Mn(2+)-binding residues include Asp14, His202, His204, and Asn238. Positions 392 to 523 are regulatory domain; sequence RLDYFSVQSG…QHNENNKETV (132 aa).

It belongs to the alpha-IPM synthase/homocitrate synthase family. LeuA type 1 subfamily. In terms of assembly, homodimer. Mn(2+) is required as a cofactor.

Its subcellular location is the cytoplasm. It carries out the reaction 3-methyl-2-oxobutanoate + acetyl-CoA + H2O = (2S)-2-isopropylmalate + CoA + H(+). Its pathway is amino-acid biosynthesis; L-leucine biosynthesis; L-leucine from 3-methyl-2-oxobutanoate: step 1/4. In terms of biological role, catalyzes the condensation of the acetyl group of acetyl-CoA with 3-methyl-2-oxobutanoate (2-ketoisovalerate) to form 3-carboxy-3-hydroxy-4-methylpentanoate (2-isopropylmalate). This Escherichia coli (strain K12 / MC4100 / BW2952) protein is 2-isopropylmalate synthase.